Here is a 511-residue protein sequence, read N- to C-terminus: Bifunctional purine biosynthesis protein PurH (511 aa).

The region spanning Met1–Val145 is the MGS-like domain.

This sequence belongs to the PurH family.

The catalysed reaction is (6R)-10-formyltetrahydrofolate + 5-amino-1-(5-phospho-beta-D-ribosyl)imidazole-4-carboxamide = 5-formamido-1-(5-phospho-D-ribosyl)imidazole-4-carboxamide + (6S)-5,6,7,8-tetrahydrofolate. It carries out the reaction IMP + H2O = 5-formamido-1-(5-phospho-D-ribosyl)imidazole-4-carboxamide. It functions in the pathway purine metabolism; IMP biosynthesis via de novo pathway; 5-formamido-1-(5-phospho-D-ribosyl)imidazole-4-carboxamide from 5-amino-1-(5-phospho-D-ribosyl)imidazole-4-carboxamide (10-formyl THF route): step 1/1. The protein operates within purine metabolism; IMP biosynthesis via de novo pathway; IMP from 5-formamido-1-(5-phospho-D-ribosyl)imidazole-4-carboxamide: step 1/1. The sequence is that of Bifunctional purine biosynthesis protein PurH from Bacillus thuringiensis subsp. konkukian (strain 97-27).